The chain runs to 608 residues: 1-phosphatidylinositol 4,5-bisphosphate phosphodiesterase zeta-1 (608 aa).

One can recognise an EF-hand domain in the interval 35-70 (CSYIHVKQIFKDNDRLKQGRITIEEFRAIYRIITHR). The region spanning 155–299 (QDMTHPLNDY…LKFKILVKNK (145 aa)) is the PI-PLC X-box domain. Active-site residues include histidine 170 and histidine 215. Positions 305 to 324 (KETHERKGSDKRGDNQDKET) are disordered. One can recognise a PI-PLC Y-box domain in the interval 349–465 (LSDLVIYTKA…GYILKPHFLR (117 aa)). The C2 domain occupies 465–589 (RESKSYFNPS…KGYRRIPLFS (125 aa)).

Interacts via its C2 domain with PtdIns(3)P and, to a lesser extent, PtdIns(5)P in vitro. Requires Ca(2+) as cofactor. In terms of tissue distribution, expressed specifically in testis and sperm. Weakly expressed in pancreatic-duct cells. Up-regulated in pancreatic-duct cells from patients with cystic fibrosis.

Its subcellular location is the nucleus. It localises to the cytoplasm. The protein localises to the perinuclear region. It catalyses the reaction a 1,2-diacyl-sn-glycero-3-phospho-(1D-myo-inositol-4,5-bisphosphate) + H2O = 1D-myo-inositol 1,4,5-trisphosphate + a 1,2-diacyl-sn-glycerol + H(+). Functionally, the production of the second messenger molecules diacylglycerol (DAG) and inositol 1,4,5-trisphosphate (IP3) is mediated by activated phosphatidylinositol-specific phospholipase C enzymes. In vitro, hydrolyzes PtdIns(4,5)P2 in a Ca(2+)-dependent manner. Triggers intracellular Ca(2+) oscillations in oocytes solely during M phase and is involved in inducing oocyte activation and initiating embryonic development up to the blastocyst stage. Is therefore a strong candidate for the egg-activating soluble sperm factor that is transferred from the sperm into the egg cytoplasm following gamete membrane fusion. May exert an inhibitory effect on phospholipase-C-coupled processes that depend on calcium ions and protein kinase C, including CFTR trafficking and function. The protein is 1-phosphatidylinositol 4,5-bisphosphate phosphodiesterase zeta-1 of Homo sapiens (Human).